Here is a 37-residue protein sequence, read N- to C-terminus: Pi-theraphotoxin-Hm3a (37 aa).

Intrachain disulfides connect C3/C18, C10/C23, and C17/C33.

The protein belongs to the psalmotoxin-1 family. As to expression, expressed by the venom gland.

It localises to the secreted. Functionally, this toxin acts on different isoforms of acid-sensing ion channel ASIC1 in a similar manner to psalmotoxin-1 (AC P60514). On ASIC1a homotrimer, it provokes a pH-dependent inhibition (IC(50)=39.7 nM on human and IC(50)=1.3 nM on rat channels), whereas it potentiates ASIC1b homotrimer and ASIC1a-ASIC1b heterotrimer (EC(50)=178.1 nM on human ASIC1b, EC(50)=46.5 nM on rat ASIC1b and EC(50)=17.4 nM on rat ASIC1a-ASIC1b channels). On rat ASIC1a, it acts by inhibiting channel currents by shifting the pH of half-maximal effect (pH(50)) of steady-state desensitization and activation to more alkaline values. The polypeptide is Pi-theraphotoxin-Hm3a (Heteroscodra maculata (Togo starburst tarantula)).